A 249-amino-acid polypeptide reads, in one-letter code: Fasciclin-like arabinogalactan protein 12 (249 aa).

Residues 1–24 (MEHSLIILLFTVLLLLTTTPGILS) form the signal peptide. The FAS1 domain occupies 37 to 181 (PTNVTKILEK…LAVYQVDKVL (145 aa)). Asn39, Asn71, Asn143, Asn152, and Asn159 each carry an N-linked (GlcNAc...) asparagine glycan. Residues 186 to 219 (VFDPRPPAPAPAPSVSKSKKKKDDSDSSSDDSPA) are disordered. Residue Asp220 is the site of GPI-anchor amidated aspartate attachment. Residues 221-249 (ASFALRNVGSVCDAVSFCVMSVMLAWFYL) constitute a propeptide, removed in mature form.

This sequence belongs to the fasciclin-like AGP family.

It localises to the cell membrane. Its function is as follows. May be a cell surface adhesion protein. The polypeptide is Fasciclin-like arabinogalactan protein 12 (FLA12) (Arabidopsis thaliana (Mouse-ear cress)).